A 368-amino-acid chain; its full sequence is 4-hydroxy-3-methylbut-2-en-1-yl diphosphate synthase (flavodoxin) (368 aa).

4 residues coordinate [4Fe-4S] cluster: C271, C274, C306, and E313.

This sequence belongs to the IspG family. The cofactor is [4Fe-4S] cluster.

The catalysed reaction is (2E)-4-hydroxy-3-methylbut-2-enyl diphosphate + oxidized [flavodoxin] + H2O + 2 H(+) = 2-C-methyl-D-erythritol 2,4-cyclic diphosphate + reduced [flavodoxin]. It participates in isoprenoid biosynthesis; isopentenyl diphosphate biosynthesis via DXP pathway; isopentenyl diphosphate from 1-deoxy-D-xylulose 5-phosphate: step 5/6. Functionally, converts 2C-methyl-D-erythritol 2,4-cyclodiphosphate (ME-2,4cPP) into 1-hydroxy-2-methyl-2-(E)-butenyl 4-diphosphate. In Histophilus somni (strain 129Pt) (Haemophilus somnus), this protein is 4-hydroxy-3-methylbut-2-en-1-yl diphosphate synthase (flavodoxin).